An 835-amino-acid polypeptide reads, in one-letter code: MSARFNHLKADAHWQGVWESQGTFQARDDSPKPKSYVLEMFPYPSGRIHMGHVRNYTMGDVLARYRRMKGFEVLHPMGWDAFGMPAENAAMEKKVHPGDWTRANIAAMRDQLKRIGFALDWSRELATCEPDYYGQEQALFLDLYAAGLVYRKESAVNWDPVDMTVLANEQVIDGRGWRSGALVERRKLNQWFLKITDFADDLLDGLDTLDQWPEKVRTMQENWIGKSQGMRFTFVLDAPAGDLTSFDVFTTRPDTMFGASFAAIAADHPIAQALSAGNPALQAFIADCKRTGTAAAEIETAEKKGYDTGLSVVHPLDPDWKLPLFVANFVLMDYGTGAVFGCPAHDQRDLDFARKYALPVKRVVAPSPEEAAAPIGDEAYVGPGRIVNSAFLDGLSVEEAKAAVIARAEAGGWGQGTTVWRLRDWGVSRQRYWGTPIPIIHCEGCGAVPVPHDQLPVVLPEDVAFDIPGNPLDRHPTWKHVDCPSCGKPARRETDTLDTFVDSSWYFIRFASQPSDKPFDRAVAESWMPVGQYIGGVEHAILHLLYARFWTRALERIGRIGVKEPFTGLFTQGMVTHETYKDPAGQWLSPEEVSDGIVVATGAPATVGRIEKMSKSKKNVVDPAPIVEQYGADAVRWFMLSDSPPERDLEWTESGIEGCWRFVNRLWRITDVSEAGDGEDRELDRKLHKAIAGIAADIEALGFNRAVAKIHELSNAIEKAAPSASRAAAARALVRLVAPMVPHLAEEAWARLGEQGLVADAAWPAHDPALLVDDEVTIAVQVNGKLRDTLTAPKGAPKDALERMALESEKITRLLEGAAPRKVIVVPDRLVNIVA.

The 'HIGH' region signature appears at 42–52 (PYPSGRIHMGH). The 'KMSKS' region signature appears at 612–616 (KMSKS). Lys615 contacts ATP.

It belongs to the class-I aminoacyl-tRNA synthetase family.

It is found in the cytoplasm. It catalyses the reaction tRNA(Leu) + L-leucine + ATP = L-leucyl-tRNA(Leu) + AMP + diphosphate. The protein is Leucine--tRNA ligase of Rhizorhabdus wittichii (strain DSM 6014 / CCUG 31198 / JCM 15750 / NBRC 105917 / EY 4224 / RW1) (Sphingomonas wittichii).